Reading from the N-terminus, the 724-residue chain is Tripartite terminase subunit 1 (724 aa).

The C3H1-type zinc-finger motif lies at 175–203; the sequence is CAVCFEELCVTANQGEATHRRLLGCVCDH. Positions 410–445 are disordered; it reads GGDDADADGGAAGGADAGDGGVGDEDGPGAPPPADA. A compositionally biased stretch (gly residues) spans 419 to 430; that stretch reads GAAGGADAGDGG. Residue 652–659 coordinates ATP; sequence FRSVFHCG.

The protein belongs to the herpesviridae TRM1 protein family. In terms of assembly, associates with TRM2 and TRM3 to form the tripartite terminase complex. Interacts with portal protein.

The protein resides in the host nucleus. In terms of biological role, component of the molecular motor that translocates viral genomic DNA in empty capsid during DNA packaging. Forms a tripartite terminase complex together with TRM2 and TRM3 in the host cytoplasm. Once the complex reaches the host nucleus, it interacts with the capsid portal vertex. This portal forms a ring in which genomic DNA is translocated into the capsid. TRM1 carries an endonuclease activity that plays an important role for the cleavage of concatemeric viral DNA into unit length genomes. This is Tripartite terminase subunit 1 from Suid herpesvirus 1 (strain Indiana-Funkhauser / Becker) (SuHV-1).